A 212-amino-acid polypeptide reads, in one-letter code: uncharacterized protein (212 aa).

The signal sequence occupies residues 1 to 18; the sequence is MQLTQVLAVAILAAGVSA. Residues 108–180 are disordered; it reads VSHNRVNAKQ…KDYGHKDYGH (73 aa). Basic and acidic residues predominate over residues 117 to 180; it reads QRRDDKKDYG…KDYGHKDYGH (64 aa). Positions 120–210 are 15 X 5 AA tandem repeats of K-D-Y-G-H; that stretch reads DDKKDYGKND…KDYGYKGYDD (91 aa). Repeat 1 spans residues 123 to 127; that stretch reads KDYGK. The 2; truncated repeat unit spans residues 128–132; the sequence is NDYGK. A run of 3 repeats spans residues 133-137, 138-142, and 143-147. One copy of the 6; truncated repeat lies at 148–152; sequence KEYDP. 5 repeat units span residues 166–170, 171–175, 176–180, 181–185, and 186–190. A 12; truncated repeat occupies 191-195; sequence DDYGY. The stretch at 196-200 is one 13; truncated repeat; that stretch reads KGYDD. One copy of the 14; truncated repeat lies at 201 to 205; the sequence is KDYGY. A 15; truncated repeat occupies 206 to 210; the sequence is KGYDD.

It localises to the secreted. This is an uncharacterized protein from Arthroderma benhamiae (strain ATCC MYA-4681 / CBS 112371) (Trichophyton mentagrophytes).